We begin with the raw amino-acid sequence, 47 residues long: Large ribosomal subunit protein bL33 (47 aa).

The protein belongs to the bacterial ribosomal protein bL33 family.

This chain is Large ribosomal subunit protein bL33, found in Staphylococcus capitis.